The following is an 889-amino-acid chain: MSNPFAHLAEPLDPVQPGKKFFNLNKLEDSRYGRLPFSIRVLLEAAIRNCDEFLVKKQDIENILHWNVTQHKNIEVPFKPARVILQDFTGVPAVVDFAAMRDAVKKLGGDPEKINPVCPADLVIDHSIQVDFNRRADSLQKNQDLEFERNRERFEFLKWGSQAFHNMRIIPPGSGIIHQVNLEYLARVVFDQDGYYYPDSLVGTDSHTTMIDGLGILGWGVGGIEAEAVMLGQPISMVLPQVIGYRLMGKPHPLVTSTDIVLTITKHLRQVGVVGKFVEFFGPGVAQLSIADRATIANMCPEYGATAAFFPVDEVSITYLVQTGRDEEKLKYIKKYLQAVGMFRDFNDPSQDPDFTQVVELDLKTVVPCCSGPKRPQDKVAVSDMKKDFESCLGAKQGFKGFQVAPEHHNDHKTFIYDNTEFTLAHGSVVIAAITSCTNTSNPSVMLGAGLLAKKAVDAGLNVMPYIKTSLSPGSGVVTYYLQESGVMPYLSQLGFDVVGYGCMTCIGNSGPLPEPVVEAITQGDLVAVGVLSGNRNFEGRVHPNTRANYLASPPLVIAYAIAGTIRIDFEKEPLGVNAKGQQVFLKDIWPTRDEIQAVERQYVIPGMFKEVYQKIETVNESWNALATPSDKLFFWNSKSTYIKSPPFFENLTLDLQPPKSIVDAYVLLNLGDSVTTDHISPAGNIARNSPAARYLTNRGLTPREFNSYGSRRGNDAVMARGTFANIRLLNRFLNKQAPQTIHLPSGEILDVFDAAERYQQAGLPLIVLAGKEYGAGSSRDWAAKGPFLLGIKAVLAESYERIHRSNLVGMGVIPLEYLPGENADALGLTGQERYTIIIPENLKPQMKVQVKLDTGKTFQAVMRFDTDVELTYFLNGGILNYMIRKMAK.

Residues glutamine 86 and 205 to 207 contribute to the substrate site; that span reads DSH. Cysteine 437, cysteine 503, and cysteine 506 together coordinate [4Fe-4S] cluster. Substrate contacts are provided by arginine 536 and arginine 541. Threonine 628 is subject to Phosphothreonine. Substrate contacts are provided by residues arginine 699 and 779–780; that span reads SR.

The protein belongs to the aconitase/IPM isomerase family. As to quaternary structure, interacts (when associated with the 4Fe-4S) with FBXL5. Interacts with frataxin(81-210). It depends on [4Fe-4S] cluster as a cofactor.

It is found in the cytoplasm. It localises to the cytosol. It catalyses the reaction citrate = D-threo-isocitrate. Functionally, bifunctional iron sensor that switches between 2 activities depending on iron availability. Iron deprivation, promotes its mRNA binding activity through which it regulates the expression of genes involved in iron uptake, sequestration and utilization. Binds to iron-responsive elements (IRES) in the untranslated region of target mRNAs preventing for instance the translation of ferritin and aminolevulinic acid synthase and stabilizing the transferrin receptor mRNA. Its function is as follows. Conversely, when cellular iron levels are high, binds a 4Fe-4S cluster which precludes RNA binding activity and promotes the aconitase activity, the isomerization of citrate to isocitrate via cis-aconitate. This Homo sapiens (Human) protein is Cytoplasmic aconitate hydratase (ACO1).